The sequence spans 417 residues: NADH-quinone oxidoreductase subunit D (417 aa).

It belongs to the complex I 49 kDa subunit family. In terms of assembly, NDH-1 is composed of 14 different subunits. Subunits NuoB, C, D, E, F, and G constitute the peripheral sector of the complex.

The protein resides in the cell inner membrane. The enzyme catalyses a quinone + NADH + 5 H(+)(in) = a quinol + NAD(+) + 4 H(+)(out). NDH-1 shuttles electrons from NADH, via FMN and iron-sulfur (Fe-S) centers, to quinones in the respiratory chain. The immediate electron acceptor for the enzyme in this species is believed to be ubiquinone. Couples the redox reaction to proton translocation (for every two electrons transferred, four hydrogen ions are translocated across the cytoplasmic membrane), and thus conserves the redox energy in a proton gradient. The polypeptide is NADH-quinone oxidoreductase subunit D (Nitrosomonas europaea (strain ATCC 19718 / CIP 103999 / KCTC 2705 / NBRC 14298)).